The sequence spans 287 residues: ATP synthase gamma chain (287 aa).

The protein belongs to the ATPase gamma chain family. In terms of assembly, F-type ATPases have 2 components, CF(1) - the catalytic core - and CF(0) - the membrane proton channel. CF(1) has five subunits: alpha(3), beta(3), gamma(1), delta(1), epsilon(1). CF(0) has three main subunits: a, b and c.

The protein localises to the cell inner membrane. Produces ATP from ADP in the presence of a proton gradient across the membrane. The gamma chain is believed to be important in regulating ATPase activity and the flow of protons through the CF(0) complex. This chain is ATP synthase gamma chain, found in Azotobacter vinelandii (strain DJ / ATCC BAA-1303).